The primary structure comprises 2283 residues: DNA polymerase epsilon catalytic subunit A (2283 aa).

The disordered stretch occupies residues 1–32 (MVLRNSGRRHPEPGADGEGSRDDGPSSSVSAL). Basic and acidic residues predominate over residues 9–24 (RHPEPGADGEGSRDDG). Residues serine 1184, serine 1296, and serine 1316 each carry the phosphoserine modification. Disordered stretches follow at residues 1935–1968 (GQVKEQDSQAREETDEEEEDKEKDEEEEGMGESE) and 2014–2041 (HSAPGSTPVKRKGASQFSQESEGATGSL). Basic and acidic residues predominate over residues 1936-1946 (QVKEQDSQARE). Residues 1947-1968 (ETDEEEEDKEKDEEEEGMGESE) are compositionally biased toward acidic residues. Over residues 2028–2037 (SQFSQESEGA) the composition is skewed to polar residues. Zn(2+)-binding residues include cysteine 2155, cysteine 2158, cysteine 2184, and cysteine 2187. Residues 2155–2187 (CHSCNFCRDLDLCKDSSFSQDGAILPQWLCSNC) form a CysA-type zinc finger. Positions 2218, 2221, 2233, and 2235 each coordinate [4Fe-4S] cluster. Positions 2218-2235 (CLKCRGMKETHMPVYCSC) match the CysB motif motif.

This sequence belongs to the DNA polymerase type-B family. In terms of assembly, component of the DNA polymerase epsilon complex consisting of four subunits: the catalytic subunit POLE and the accessory subunits POLE2, POLE3 and POLE4. Interacts with RAD17 and TOPBP1. [4Fe-4S] cluster serves as cofactor.

It localises to the nucleus. The enzyme catalyses DNA(n) + a 2'-deoxyribonucleoside 5'-triphosphate = DNA(n+1) + diphosphate. Its function is as follows. Catalytic component of the DNA polymerase epsilon complex. Participates in chromosomal DNA replication. Required during synthesis of the leading DNA strands at the replication fork and binds at/or near replication origins and moves along DNA with the replication fork. Has 3'-5' proofreading exonuclease activity that corrects errors arising during DNA replication. It is also involved in DNA synthesis during DNA repair. In Mus musculus (Mouse), this protein is DNA polymerase epsilon catalytic subunit A (Pole).